Here is a 192-residue protein sequence, read N- to C-terminus: Putative BTB/POZ domain-containing protein At4g04090 (192 aa).

In terms of domain architecture, BTB spans 23–96 (VDVRLMARDS…TYSDGSMLSE (74 aa)).

The protein operates within protein modification; protein ubiquitination. Functionally, may act as a substrate-specific adapter of an E3 ubiquitin-protein ligase complex (CUL3-RBX1-BTB) which mediates the ubiquitination and subsequent proteasomal degradation of target proteins. The sequence is that of Putative BTB/POZ domain-containing protein At4g04090 from Arabidopsis thaliana (Mouse-ear cress).